Reading from the N-terminus, the 157-residue chain is Transcription elongation factor GreA (157 aa).

A coiled-coil region spans residues 12–74; sequence LKKLEEELEY…TLEAMLKNAK (63 aa).

The protein belongs to the GreA/GreB family.

Functionally, necessary for efficient RNA polymerase transcription elongation past template-encoded arresting sites. The arresting sites in DNA have the property of trapping a certain fraction of elongating RNA polymerases that pass through, resulting in locked ternary complexes. Cleavage of the nascent transcript by cleavage factors such as GreA or GreB allows the resumption of elongation from the new 3'terminus. GreA releases sequences of 2 to 3 nucleotides. In Caldanaerobacter subterraneus subsp. tengcongensis (strain DSM 15242 / JCM 11007 / NBRC 100824 / MB4) (Thermoanaerobacter tengcongensis), this protein is Transcription elongation factor GreA.